The primary structure comprises 252 residues: MAKNAMLCLLILRVVLALAFATNKKGDEEPENHSTGIFGKVGRVVTVALAMSSRLGGADATRGGGAVYGGNLKSNQLPNNNWMAPPPPMAMRSAKVYDSKHSPAEYLKKFAQDFRRKTGMHSQRHHEETTLEQEKRVAGAGPDPIHHQDTTLEQEKRAVPAGPDPKHHEETTLEQEKRVAGAGPDPIHHQDTTLEQEKRAVPAGPDPTHHEETTLEQEKRAVPAGPDPKHHEETTFEQEKRGAPAGPDPIHH.

The first 21 residues, 1–21 (MAKNAMLCLLILRVVLALAFA), serve as a signal peptide directing secretion. The interval 21–83 (ATNKKGDEEP…SNQLPNNNWM (63 aa)) is required for secretion from the host cytoplasm to the host apoplasm. An N-linked (GlcNAc...) asparagine glycan is attached at asparagine 32. The segment at 116 to 252 (RKTGMHSQRH…APAGPDPIHH (137 aa)) is disordered. 4 stretches are compositionally biased toward basic and acidic residues: residues 125-137 (HHEE…EKRV), 144-179 (PIHH…EKRV), 186-200 (PIHH…EKRA), and 207-242 (PTHH…EKRG). An A-1 repeat occupies 127 to 135 (EETTLEQEK). The tract at residues 127 to 219 (EETTLEQEKR…HEETTLEQEK (93 aa)) is 6 X approximate repeat A. Residues 136–147 (RVAGAGPDPIHH) form a CLE-1 repeat. The segment at 136-252 (RVAGAGPDPI…APAGPDPIHH (117 aa)) is 6 X approximate repeat CLE. Residues 148–156 (QDTTLEQEK) form an A-2 repeat. The stretch at 157-168 (RAVPAGPDPKHH) is one CLE-2 repeat. The stretch at 169-177 (EETTLEQEK) is one A-3 repeat. The stretch at 178–189 (RVAGAGPDPIHH) is one CLE-3 repeat. The stretch at 190-198 (QDTTLEQEK) is one A-4 repeat. Residues 199–210 (RAVPAGPDPTHH) form a CLE-4 repeat. The A-5 repeat unit spans residues 211-219 (EETTLEQEK). Residues 220–231 (RAVPAGPDPKHH) form a CLE-5 repeat. The stretch at 232-240 (EETTFEQEK) is one A-6 repeat. Residues 241-252 (RGAPAGPDPIHH) form a CLE-6 repeat.

The protein belongs to the CLV3/ESR signal peptide family. In terms of tissue distribution, highly expressed exclusively within the dorsal esophageal gland cell during syncytium formation in host plants.

It is found in the secreted. It localises to the host cytoplasm. The protein localises to the host extracellular space. Its subcellular location is the extracellular space. The protein resides in the apoplast. Functionally, mimics host plant CLE extracellular signal peptides that regulate cell fate. May play a role in the differentiation or division of feeding cells (syncytia) induced in plant roots during infection. The chain is CLAVATA3/ESR (CLE)-related protein 4A-2 (CLE-4A-2) from Globodera rostochiensis (Golden nematode worm).